Consider the following 136-residue polypeptide: MSAEQFVGRWKLVESENFEDYLKEVGVGLLLRKAACAAKPTLEIKVNGNKWHVNQLSTFKNTTLEFTLGVEFDETTPDGRQFKSTITIEDGKVVHVQKRIKDSDHDSVITRWFEGEKLITTLQSGSVISRRAYIRE.

Residues R111 and 131–133 (RAY) each bind a fatty acid.

This sequence belongs to the calycin superfamily. Fatty-acid binding protein (FABP) family.

In Caenorhabditis elegans, this protein is Fatty acid-binding protein homolog 5 (lbp-5).